A 960-amino-acid chain; its full sequence is CWF19-like protein 2 (960 aa).

Disordered stretches follow at residues 1 to 222 (MAAY…AGVV), 261 to 552 (EFQK…ELIL), 624 to 648 (AWPV…AIET), and 712 to 731 (AQKE…AVQE). Positions 13–101 (SIKSRKESKR…KKAKKEKKDE (89 aa)) form a coiled coil. Basic and acidic residues predominate over residues 16–52 (SRKESKREERERVIQKAKEKFEKEERRKAERKARGED). Residues 73–96 (KTKKAKKEKKAKKSKKEKKKKAKK) are compositionally biased toward basic residues. Acidic residues predominate over residues 108–117 (SSEDSEDEWV). Positions 135–146 (EATPSSSSASNN) are enriched in low complexity. Residues 163–279 (SVADRRAQKE…EDAAYGERRD (117 aa)) are a coiled coil. 3 stretches are compositionally biased toward basic and acidic residues: residues 165–181 (ADRR…ERQK), 261–372 (EFQK…DDLS), and 404–417 (KPVD…EAGF). The span at 507-518 (SAVQDSETPTLQ) shows a compositional bias: polar residues. The stretch at 540-605 (SESEEEEEEE…IKDQSKRASK (66 aa)) forms a coiled coil. The segment covering 541–552 (ESEEEEEEELIL) has biased composition (acidic residues). A compositionally biased stretch (basic and acidic residues) spans 713 to 731 (QKERAGRDEERQRNKAVQE).

This sequence belongs to the CWF19 family.

In Danio rerio (Zebrafish), this protein is CWF19-like protein 2 (cwf19l2).